Reading from the N-terminus, the 146-residue chain is Snake venom vascular endothelial growth factor toxin (146 aa).

Positions 1 to 24 are cleaved as a signal peptide; it reads MAAYLLAVAILFCIQGWPLGTVQG. A Pyrrolidone carboxylic acid modification is found at glutamine 25. 3 disulfide bridges follow: cysteine 38/cysteine 80, cysteine 69/cysteine 115, and cysteine 73/cysteine 117. The disordered stretch occupies residues 119 to 146; that stretch reads PRSASGVNSRKHKRNPEEGEPRAKFPFV. Residues 133–146 show a composition bias toward basic and acidic residues; the sequence is NPEEGEPRAKFPFV.

Belongs to the PDGF/VEGF growth factor family. Snake venom VEGF subfamily. In terms of assembly, homodimer; disulfide-linked. Interacts with VEGF receptor-1 (FLT1) with a high affinity, whereas it binds to VEGF receptor-2 (KDR) with a low affinity. Does not bind VEGF receptor-3 (FLT4). As to expression, expressed by the venom gland.

It is found in the secreted. In terms of biological role, snake venom VEGFs may contribute to venom dispersion and prey subjugation by inducing vascular permeability and hypotension. This protein induces vascular permeability probably through VEGF (VEGFR) signaling. This protein also induces a drastic hypotensive effect after intravenous injection. The hypotension is mediated by nitric oxide (NO), which is produced by VEGF-activated endothelium NO synthase. Also induces angiogenesis in vitro. Like other crotalid VEGFs, this protein interacts with VEGF receptor-1 (FLT1) with a high affinity, whereas it binds to VEGF receptor-2 (KDR) with a low affinity. The polypeptide is Snake venom vascular endothelial growth factor toxin (Bothrops insularis (Golden lancehead)).